A 227-amino-acid chain; its full sequence is Claudin-15 (227 aa).

A topological domain (cytoplasmic) is located at residue methionine 1. A helical membrane pass occupies residues 2 to 24 (SVAVETFGFFMSALGLLMLGLTL). Residues 25–74 (SNSYWRVSTVHGNVITTNTIFENLWYSCATDSLGVSNCWDFPSMLALSGY) are Extracellular-facing. The cysteines at positions 52 and 62 are disulfide-linked. A helical transmembrane segment spans residues 75–99 (VQGCRALMITAILLGFLGLFLGMVG). Over 100 to 115 (LRCTNVGNMDLSKKAK) the chain is Cytoplasmic. Serine 111 carries the phosphoserine modification. Residues 116–140 (LLAIAGTLHILAGACGMVAISWYAV) form a helical membrane-spanning segment. The Extracellular portion of the chain corresponds to 141-159 (NITTDFFNPLYAGTKYELG). Positions 146–147 (FF) are important for the formation of tight-junction strand-like structures. The helical transmembrane segment at 160–182 (PALYLGWSASLLSILGGICVFST) threads the bilayer. The Cytoplasmic portion of the chain corresponds to 183-227 (CCCSSKEEPATRAGLPYKPSTVVIPRATSDESDISFGKYGKNAYV). Residues serine 211, serine 214, and serine 217 each carry the phosphoserine modification.

The protein belongs to the claudin family. Can form homo- and heteropolymeric tight junction strands. In terms of processing, palmitoylated when heterogeneously expressed in S.frugiperda cells. As to expression, detected in duodenum, jejunum and ileum. Detected on intestinal villi and crypts (at protein level). Ubiquitous. Detected in small and large intestine, colon, jejunum, heart, kidney and lung.

The protein localises to the cell junction. The protein resides in the tight junction. Its subcellular location is the cell membrane. It carries out the reaction Na(+)(in) = Na(+)(out). The catalysed reaction is K(+)(in) = K(+)(out). It catalyses the reaction Cs(+)(in) = Cs(+)(out). The enzyme catalyses Rb(+)(in) = Rb(+)(out). It carries out the reaction Li(+)(in) = Li(+)(out). The catalysed reaction is NH4(+)(in) = NH4(+)(out). It catalyses the reaction methylamine(out) = methylamine(in). The enzyme catalyses H2O(in) = H2O(out). Forms paracellular channels: polymerizes in tight junction strands with cation- and water-selective channels through the strands, conveying epithelial permeability in a process known as paracellular tight junction permeability. In intestinal epithelium, allows for sodium and water fluxes from the peritoneal side to the lumen of the intestine to regulate nutrient absorption and intestinal morphogenesis. This is Claudin-15 from Mus musculus (Mouse).